The sequence spans 181 residues: Adenine phosphoribosyltransferase (181 aa).

The protein belongs to the purine/pyrimidine phosphoribosyltransferase family. As to quaternary structure, homodimer.

It localises to the cytoplasm. It catalyses the reaction AMP + diphosphate = 5-phospho-alpha-D-ribose 1-diphosphate + adenine. It participates in purine metabolism; AMP biosynthesis via salvage pathway; AMP from adenine: step 1/1. Functionally, catalyzes a salvage reaction resulting in the formation of AMP, that is energically less costly than de novo synthesis. The chain is Adenine phosphoribosyltransferase from Rhodopseudomonas palustris (strain BisB5).